The primary structure comprises 431 residues: Histidinol dehydrogenase (431 aa).

NAD(+) is bound by residues tyrosine 124, glutamine 187, and asparagine 210. Substrate is bound by residues serine 236, glutamine 258, and histidine 261. Positions 258 and 261 each coordinate Zn(2+). Residues glutamate 325 and histidine 326 each act as proton acceptor in the active site. 4 residues coordinate substrate: histidine 326, aspartate 359, glutamate 413, and histidine 418. Aspartate 359 provides a ligand contact to Zn(2+). Histidine 418 is a binding site for Zn(2+).

This sequence belongs to the histidinol dehydrogenase family. It depends on Zn(2+) as a cofactor.

It carries out the reaction L-histidinol + 2 NAD(+) + H2O = L-histidine + 2 NADH + 3 H(+). It participates in amino-acid biosynthesis; L-histidine biosynthesis; L-histidine from 5-phospho-alpha-D-ribose 1-diphosphate: step 9/9. Functionally, catalyzes the sequential NAD-dependent oxidations of L-histidinol to L-histidinaldehyde and then to L-histidine. This chain is Histidinol dehydrogenase, found in Legionella pneumophila (strain Lens).